A 100-amino-acid polypeptide reads, in one-letter code: Large ribosomal subunit protein uL23 (100 aa).

Belongs to the universal ribosomal protein uL23 family. As to quaternary structure, part of the 50S ribosomal subunit. Contacts protein L29, and trigger factor when it is bound to the ribosome.

One of the early assembly proteins it binds 23S rRNA. One of the proteins that surrounds the polypeptide exit tunnel on the outside of the ribosome. Forms the main docking site for trigger factor binding to the ribosome. The sequence is that of Large ribosomal subunit protein uL23 from Prochlorococcus marinus (strain MIT 9312).